An 82-amino-acid polypeptide reads, in one-letter code: ATP synthase subunit c, chloroplastic (82 aa).

2 consecutive transmembrane segments (helical) span residues 3 to 23 (PLIA…AAIG) and 57 to 77 (FAFM…LLFA).

Belongs to the ATPase C chain family. As to quaternary structure, F-type ATPases have 2 components, F(1) - the catalytic core - and F(0) - the membrane proton channel. F(1) has five subunits: alpha(3), beta(3), gamma(1), delta(1), epsilon(1). F(0) has four main subunits: a(1), b(1), b'(1) and c(10-14). The alpha and beta chains form an alternating ring which encloses part of the gamma chain. F(1) is attached to F(0) by a central stalk formed by the gamma and epsilon chains, while a peripheral stalk is formed by the delta, b and b' chains.

The protein localises to the plastid. It localises to the chloroplast thylakoid membrane. F(1)F(0) ATP synthase produces ATP from ADP in the presence of a proton or sodium gradient. F-type ATPases consist of two structural domains, F(1) containing the extramembraneous catalytic core and F(0) containing the membrane proton channel, linked together by a central stalk and a peripheral stalk. During catalysis, ATP synthesis in the catalytic domain of F(1) is coupled via a rotary mechanism of the central stalk subunits to proton translocation. Its function is as follows. Key component of the F(0) channel; it plays a direct role in translocation across the membrane. A homomeric c-ring of between 10-14 subunits forms the central stalk rotor element with the F(1) delta and epsilon subunits. This is ATP synthase subunit c, chloroplastic from Oltmannsiellopsis viridis (Marine flagellate).